A 692-amino-acid polypeptide reads, in one-letter code: Elongation factor G (692 aa).

The region spanning 8–282 (EKTRNIGIMA…GVVDYLPSPV (275 aa)) is the tr-type G domain. GTP is bound by residues 17–24 (AHIDAGKT), 81–85 (DTPGH), and 135–138 (NKMD).

Belongs to the TRAFAC class translation factor GTPase superfamily. Classic translation factor GTPase family. EF-G/EF-2 subfamily.

The protein resides in the cytoplasm. In terms of biological role, catalyzes the GTP-dependent ribosomal translocation step during translation elongation. During this step, the ribosome changes from the pre-translocational (PRE) to the post-translocational (POST) state as the newly formed A-site-bound peptidyl-tRNA and P-site-bound deacylated tRNA move to the P and E sites, respectively. Catalyzes the coordinated movement of the two tRNA molecules, the mRNA and conformational changes in the ribosome. In Geobacillus kaustophilus (strain HTA426), this protein is Elongation factor G.